The chain runs to 348 residues: Selenide, water dikinase (348 aa).

Cys17 is an active-site residue. ATP is bound by residues Lys20 and 48 to 50 (TRD). Residue Asp51 participates in Mg(2+) binding. ATP is bound by residues Asp68, Asp91, and 139–141 (GHS). Asp91 contributes to the Mg(2+) binding site. Position 227 (Asp227) interacts with Mg(2+).

This sequence belongs to the selenophosphate synthase 1 family. Class I subfamily. Homodimer. Requires Mg(2+) as cofactor.

The enzyme catalyses hydrogenselenide + ATP + H2O = selenophosphate + AMP + phosphate + 2 H(+). In terms of biological role, synthesizes selenophosphate from selenide and ATP. The sequence is that of Selenide, water dikinase from Yersinia pestis.